The chain runs to 184 residues: Large ribosomal subunit protein uL18 (184 aa).

It belongs to the universal ribosomal protein uL18 family. In terms of assembly, part of the 50S ribosomal subunit. Contacts the 5S and 23S rRNAs.

Functionally, this is one of the proteins that bind and probably mediate the attachment of the 5S RNA into the large ribosomal subunit, where it forms part of the central protuberance. This Haloferax volcanii (strain ATCC 29605 / DSM 3757 / JCM 8879 / NBRC 14742 / NCIMB 2012 / VKM B-1768 / DS2) (Halobacterium volcanii) protein is Large ribosomal subunit protein uL18 (rpl18).